Consider the following 247-residue polypeptide: UPF0246 protein LCABL_22600 (247 aa).

Belongs to the UPF0246 family.

The chain is UPF0246 protein LCABL_22600 from Lacticaseibacillus casei (strain BL23) (Lactobacillus casei).